The chain runs to 181 residues: FMN reductase (NADH) RutF (181 aa).

The protein belongs to the non-flavoprotein flavin reductase family. RutF subfamily.

The catalysed reaction is FMNH2 + NAD(+) = FMN + NADH + 2 H(+). Functionally, catalyzes the reduction of FMN to FMNH2 which is used to reduce pyrimidine by RutA via the Rut pathway. The sequence is that of FMN reductase (NADH) RutF from Ancylobacter novellus (strain ATCC 8093 / DSM 506 / JCM 20403 / CCM 1077 / IAM 12100 / NBRC 12443 / NCIMB 10456) (Starkeya novella).